Consider the following 89-residue polypeptide: Small ribosomal subunit protein bS20 (89 aa).

The disordered stretch occupies residues 1-20 (MANHKSAEKRARQTIKRTER).

The protein belongs to the bacterial ribosomal protein bS20 family.

Functionally, binds directly to 16S ribosomal RNA. This is Small ribosomal subunit protein bS20 from Campylobacter curvus (strain 525.92).